A 162-amino-acid chain; its full sequence is Probable chemoreceptor glutamine deamidase CheD (162 aa).

Belongs to the CheD family.

The catalysed reaction is L-glutaminyl-[protein] + H2O = L-glutamyl-[protein] + NH4(+). Probably deamidates glutamine residues to glutamate on methyl-accepting chemotaxis receptors (MCPs), playing an important role in chemotaxis. The protein is Probable chemoreceptor glutamine deamidase CheD of Clostridium botulinum (strain Alaska E43 / Type E3).